The sequence spans 611 residues: Pleckstrin homology domain-containing family N member 1 (611 aa).

The segment at 1 to 45 is disordered; it reads MGNSHCVPQAPRRLRASFSRKPSLKGNREDSARMSAGLPGPEAAR. Residue G2 is the site of N-myristoyl glycine attachment. Residues 61–100 are interaction with C1QBP; it reads TDILDLENQRENLEQPFLSVFKKGRRRVPVRNLGKVVHYA. PH domains lie at 96 to 192 and 222 to 319; these read VVHY…TALL and AVCA…THRE. Phosphotyrosine is present on Y302. Disordered regions lie at residues 323–424, 438–468, and 483–611; these read PLPG…PVTP, ESSP…TSHR, and MQSA…VQWI. A compositionally biased stretch (low complexity) spans 341-350; the sequence is GSLSSGGQTS. Residues 360-391 are compositionally biased toward polar residues; sequence STRTSHSLPESSVPSTVGCSSQHTPDQANSDR. At Y456 the chain carries Phosphotyrosine. The span at 498–509 shows a compositional bias: low complexity; it reads VPVSVPASDPRS. At S559 the chain carries Phosphoserine. Residues 570-585 show a composition bias toward basic and acidic residues; sequence RSPRRSRDPGYDHLWD.

As to quaternary structure, found in a complex with cytochrome c mRNA and various ribosomal proteins. Interacts with C1QBP. Interacts with ELAVL1. Interacts with BID. In terms of processing, phosphorylation is essential for its mitochondrial localization and regulates its interaction with C1QBP. In terms of tissue distribution, ubiquitous. Epressed in several cancer cell lines of differing origin.

Its subcellular location is the cell membrane. It localises to the mitochondrion. It is found in the mitochondrion membrane. Functionally, controls the stability of the leptin mRNA harboring an AU-rich element (ARE) in its 3' UTR, in cooperation with the RNA stabilizer ELAVL1. Decreases the stability of the leptin mRNA by antagonizing the function of ELAVL1 by inducing its atypical recruitment from the nucleus to the cytosol. Binds to cardiolipin (CL), phosphatidic acid (PA), phosphatidylinositol 4-phosphate (PtdIns(4)P) and phosphatidylserine (PS). Promotes apoptosis by enhancing BAX-BAK hetero-oligomerization via interaction with BID in colon cancer cells. The chain is Pleckstrin homology domain-containing family N member 1 (PLEKHN1) from Homo sapiens (Human).